The chain runs to 153 residues: ILNVAVEGALWRLRGTDGKAPSMIGWWPAKAVTFVDNHDTGSTQHMWPFPSDRVMQGYAYILTHPRTPCIFYDHFFDWGPKEEIDRLVSVRTRHGIHNESKLQIIEADADLYLAEIDGKVIVKLGPRYDVGNLIPGGFEGAAHGNDYAVWEKI.

Substrate-binding positions include Lys19, 25 to 27 (GWW), His38, Gln44, Lys123, and Trp150.

It belongs to the glycosyl hydrolase 13 family. As to quaternary structure, monomer. It depends on Ca(2+) as a cofactor.

The enzyme catalyses Endohydrolysis of (1-&gt;4)-alpha-D-glucosidic linkages in polysaccharides containing three or more (1-&gt;4)-alpha-linked D-glucose units.. The protein is Alpha-amylase type B isozyme (AMY1.4) of Hordeum vulgare (Barley).